We begin with the raw amino-acid sequence, 210 residues long: WASH complex subunit 3 (210 aa).

A coiled-coil region spans residues 49–73 (EEKLASISLRIQQIETTLSILEAKL). The tract at residues 173–210 (LDPNLLDTPDAPVPDAVKKNTLDQDDDSDDGSESSFSD) is disordered. Over residues 195–204 (DQDDDSDDGS) the composition is skewed to acidic residues.

Belongs to the CCDC53 family. As to quaternary structure, component of the WASH complex.

The chain is WASH complex subunit 3 from Salmo salar (Atlantic salmon).